The chain runs to 232 residues: Probable proteasome subunit alpha type-3 (232 aa).

The protein belongs to the peptidase T1A family. As to quaternary structure, the 26S proteasome consists of a 20S proteasome core and two 19S regulatory subunits. The 20S proteasome core is composed of 28 subunits that are arranged in four stacked rings, resulting in a barrel-shaped structure. The two end rings are each formed by seven alpha subunits, and the two central rings are each formed by seven beta subunits. The catalytic chamber with the active sites is on the inside of the barrel.

Its subcellular location is the cytoplasm. The protein resides in the nucleus. In terms of biological role, the proteasome degrades poly-ubiquitinated proteins in the cytoplasm and in the nucleus. It is essential for the regulated turnover of proteins and for the removal of misfolded proteins. The proteasome is a multicatalytic proteinase complex that is characterized by its ability to cleave peptides with Arg, Phe, Tyr, Leu, and Glu adjacent to the leaving group at neutral or slightly basic pH. It has an ATP-dependent proteolytic activity. The protein is Probable proteasome subunit alpha type-3 (PRE9) of Encephalitozoon cuniculi (strain GB-M1) (Microsporidian parasite).